Here is a 142-residue protein sequence, read N- to C-terminus: Small ribosomal subunit protein uS12 (142 aa).

The interval 1–43 (MPTFNQLVRKGRKVIEKKSNSPALQKGFNSKKKKPTDVNSPQK) is disordered. The residue at position 102 (aspartate 102) is a 3-methylthioaspartic acid.

It belongs to the universal ribosomal protein uS12 family. Part of the 30S ribosomal subunit. Contacts proteins S8 and S17. May interact with IF1 in the 30S initiation complex.

Its function is as follows. With S4 and S5 plays an important role in translational accuracy. Functionally, interacts with and stabilizes bases of the 16S rRNA that are involved in tRNA selection in the A site and with the mRNA backbone. Located at the interface of the 30S and 50S subunits, it traverses the body of the 30S subunit contacting proteins on the other side and probably holding the rRNA structure together. The combined cluster of proteins S8, S12 and S17 appears to hold together the shoulder and platform of the 30S subunit. The protein is Small ribosomal subunit protein uS12 of Ruminiclostridium cellulolyticum (strain ATCC 35319 / DSM 5812 / JCM 6584 / H10) (Clostridium cellulolyticum).